We begin with the raw amino-acid sequence, 476 residues long: DnaJ homolog subfamily C member 7 homolog (476 aa).

Positions 1–22 (MTEVETTHMNAGTESQQEPAEL) are disordered. Residues 7 to 18 (THMNAGTESQQE) are compositionally biased toward polar residues. 7 TPR repeats span residues 23 to 56 (AEKQKAIGNAFYKEKKYAEAIKAYTEAIDLGSDS), 59 to 92 (AIYYSNRAATYMQIGEFELALCDAKQSDRIKPDV), 143 to 176 (MSWMYLKAQVYIFQNDMDRAQKIAHDVLRLNPKN), 177 to 210 (VEALVLRGKVMYYSGENAKAITHFQEALKLDPDC), 223 to 256 (LENTKNQGNDLFRQGNYQDAYEKYSEALQIDPDN), 261 to 294 (AKLYMNRATVLLRLKRPEEALSDSDNALAIDSSY), and 295 to 328 (LKGLKVRAKAHEALEKWEEAVRDVQSAIELDASD). A J domain is found at 349–414 (DHYKILGVSK…ESRRRFDSGV (66 aa)).

The protein localises to the cytoplasm. The polypeptide is DnaJ homolog subfamily C member 7 homolog (Schizosaccharomyces pombe (strain 972 / ATCC 24843) (Fission yeast)).